Reading from the N-terminus, the 424-residue chain is UDP-N-acetylglucosamine 1-carboxyvinyltransferase (424 aa).

Residue 22 to 23 (KN) coordinates phosphoenolpyruvate. R96 contributes to the UDP-N-acetyl-alpha-D-glucosamine binding site. The active-site Proton donor is C120. 2-(S-cysteinyl)pyruvic acid O-phosphothioketal is present on C120. UDP-N-acetyl-alpha-D-glucosamine contacts are provided by residues 125–129 (RPVDQ), D312, and I334.

This sequence belongs to the EPSP synthase family. MurA subfamily.

Its subcellular location is the cytoplasm. The enzyme catalyses phosphoenolpyruvate + UDP-N-acetyl-alpha-D-glucosamine = UDP-N-acetyl-3-O-(1-carboxyvinyl)-alpha-D-glucosamine + phosphate. It participates in cell wall biogenesis; peptidoglycan biosynthesis. Cell wall formation. Adds enolpyruvyl to UDP-N-acetylglucosamine. In Polynucleobacter necessarius subsp. necessarius (strain STIR1), this protein is UDP-N-acetylglucosamine 1-carboxyvinyltransferase.